The chain runs to 216 residues: MGTRDDEYDYLFKVVLIGDSGVGKSNLLSRFTRNEFNLESKSTIGVEFATRSIQVDGKTIKAQIWDTAGQERYRAITSAYYRGAVGALLVYDIAKHLTYENVERWLKELRDHADSNIVIMLVGNKSDLRHLRAVPTDEARAFAEKNGLSFIETSALDYTNVEAAFQTILTEIYRIVSQKQMSDRRENDMSPSNNVVPIHVPPTTENKPKVQCCQNI.

Gly2 carries the post-translational modification N-acetylglycine. Positions 20, 21, 22, 23, 24, 25, 26, 37, 38, 40, 42, and 43 each coordinate GTP. A Mg(2+)-binding site is contributed by Ser25. Residues 36-47 (FNLESKSTIGVE) carry the Switch 1 motif. Thr43 and Asp66 together coordinate Mg(2+). The short motif at 67–86 (TAGQERYRAITSAYYRGAVG) is the Switch 2 element. Gly69, Asn124, Lys125, Asp127, Ala155, and Leu156 together coordinate GTP. The segment at 183–207 (DRRENDMSPSNNVVPIHVPPTTENK) is disordered. 2 S-geranylgeranyl cysteine lipidation sites follow: Cys212 and Cys213. Cys213 is modified (cysteine methyl ester). A propeptide spans 214–216 (QNI) (removed in mature form).

Belongs to the small GTPase superfamily. Rab family. As to quaternary structure, interacts (GTP-bound form) with RAB11FIPs (via their C-termini) including RAB11FIP1, RAB11FIP2, RAB11FIP3, RAB11FIP4 and RAB11FIP5 effectors. Forms a complex with RAB11FIP3 and dynein intermediate chain DYNC1LI1; the interaction between RAB11A1 and RAB11FIP3 is direct; the complex regulates endocytic trafficking. Interacts with EVI5; EVI5 and RAB11FIP3 may be mutually exclusive and compete for binding RAB11A. Interacts with SGSM1, SGSM2, SGSM3 and VIPAS39. Interacts with EXOC6 in a GTP-dependent manner. Interacts with RAB11FIP5. Interacts with STXBP6. Interacts (GDP-bound form) with ZFYVE27. Interacts with BIRC6/bruce. May interact with TBC1D14. Interacts with UNC119; in a cell cycle-dependent manner. GDP-bound and nucleotide-free forms interact with SH3BP5. Interacts (GDP-bound form) with KIF5A in a ZFYVE27-dependent manner. Interacts (GDP-bound form) with RELCH. Found in a complex composed of RELCH, OSBP1 and RAB11A. Interacts with TBC1D12. Interacts with DEF6. Interacts with ATP9A. Forms a heterotetramer with RAB11FIP3; the GTP-bound form is preferred for binding. Forms a complex with Rabin8/RAB3IP and RAB11FIP3, probably a heterohexamer with two of each protein subunit, where Rabin8/RAB3IP and RAB11FIP3 simultaneously bind to RAB11A; the complex promotes preciliary trafficking and cilia growth. Forms a complex containing RAB11A, ASAP1, Rabin8/RAB3IP, RAP11FIP3 and ARF4; the complex promotes preciliary trafficking; the complex binds to RHO in photoreceptor cells and promotes RHO ciliary transport. Interacts (GTP-bound form) with WDR44; the interaction prevents RAB11A-RAB3IP-RAB11FIP3 complex formation. Mg(2+) serves as cofactor.

Its subcellular location is the cell membrane. The protein resides in the endosome membrane. It localises to the recycling endosome membrane. It is found in the cleavage furrow. The protein localises to the cytoplasmic vesicle. Its subcellular location is the phagosome. The protein resides in the cytoplasmic vesicle membrane. It localises to the golgi apparatus. It is found in the trans-Golgi network. It carries out the reaction GTP + H2O = GDP + phosphate + H(+). With respect to regulation, regulated by guanine nucleotide exchange factors (GEFs) which promote the exchange of bound GDP for free GTP. Regulated by GTPase activating proteins (GAPs) which increase the GTP hydrolysis activity. Inhibited by GDP dissociation inhibitors (GDIs) which prevent Rab-GDP dissociation. Functionally, the small GTPases Rab are key regulators of intracellular membrane trafficking, from the formation of transport vesicles to their fusion with membranes. Rabs cycle between an inactive GDP-bound form and an active GTP-bound form that is able to recruit to membranes different set of downstream effectors directly responsible for vesicle formation, movement, tethering and fusion. The small Rab GTPase RAB11A regulates endocytic recycling. Forms a functional Rab11/RAB11FIP3/dynein complex that regulates the movement of peripheral sorting endosomes (SE) along microtubule tracks toward the microtubule organizing center/centrosome, generating the endosomal recycling compartment (ERC). Acts as a major regulator of membrane delivery during cytokinesis. Together with MYO5B and RAB8A participates in epithelial cell polarization. Together with Rabin8/RAB3IP, RAB8A, the exocyst complex, PARD3, PRKCI, ANXA2, CDC42 and DNMBP promotes transcytosis of PODXL to the apical membrane initiation sites (AMIS), apical surface formation and lumenogenesis. Together with MYO5B participates in CFTR trafficking to the plasma membrane and TF (Transferrin) recycling in nonpolarized cells. Required in a complex with MYO5B and RAB11FIP2 for the transport of NPC1L1 to the plasma membrane. Participates in the sorting and basolateral transport of CDH1 from the Golgi apparatus to the plasma membrane. Regulates the recycling of FCGRT (receptor of Fc region of monomeric IgG) to basolateral membranes. May also play a role in melanosome transport and release from melanocytes. Promotes Rabin8/RAB3IP preciliary vesicular trafficking to mother centriole by forming a ciliary targeting complex containing Rab11, ASAP1, Rabin8/RAB3IP, RAB11FIP3 and ARF4, thereby regulating ciliogenesis initiation. On the contrary, upon LPAR1 receptor signaling pathway activation, interaction with phosphorylated WDR44 prevents Rab11-RAB3IP-RAB11FIP3 complex formation and cilia growth. Participates in the export of a subset of neosynthesized proteins through a Rab8-Rab10-Rab11-endososomal dependent export route via interaction with WDR44. This chain is Ras-related protein Rab-11A, found in Bos taurus (Bovine).